The sequence spans 236 residues: 2-C-methyl-D-erythritol 4-phosphate cytidylyltransferase (236 aa).

It belongs to the IspD/TarI cytidylyltransferase family. IspD subfamily. As to quaternary structure, homodimer.

It carries out the reaction 2-C-methyl-D-erythritol 4-phosphate + CTP + H(+) = 4-CDP-2-C-methyl-D-erythritol + diphosphate. It functions in the pathway isoprenoid biosynthesis; isopentenyl diphosphate biosynthesis via DXP pathway; isopentenyl diphosphate from 1-deoxy-D-xylulose 5-phosphate: step 2/6. Its function is as follows. Catalyzes the formation of 4-diphosphocytidyl-2-C-methyl-D-erythritol from CTP and 2-C-methyl-D-erythritol 4-phosphate (MEP). The protein is 2-C-methyl-D-erythritol 4-phosphate cytidylyltransferase of Escherichia coli O127:H6 (strain E2348/69 / EPEC).